The primary structure comprises 147 residues: MAKKVTGYVKLQLPAGKANPSPPVGPALGQHGVNIMAFCKDFNSRTAAQGDLIIPVVITVYSDRSFTFIMKTPPASVLLKKAAGLETKKKPGAGSKEPNKVKVGKVTQKQLKELAQLKMQDMNTTNLESAMRSMAGTARSMGIDVVD.

It belongs to the universal ribosomal protein uL11 family. As to quaternary structure, part of the ribosomal stalk of the 50S ribosomal subunit. Interacts with L10 and the large rRNA to form the base of the stalk. L10 forms an elongated spine to which L12 dimers bind in a sequential fashion forming a multimeric L10(L12)X complex. Post-translationally, one or more lysine residues are methylated.

Forms part of the ribosomal stalk which helps the ribosome interact with GTP-bound translation factors. The polypeptide is Large ribosomal subunit protein uL11 (Sorangium cellulosum (strain So ce56) (Polyangium cellulosum (strain So ce56))).